The chain runs to 506 residues: Maturase K (506 aa).

This sequence belongs to the intron maturase 2 family. MatK subfamily.

The protein localises to the plastid. It is found in the chloroplast. Usually encoded in the trnK tRNA gene intron. Probably assists in splicing its own and other chloroplast group II introns. The chain is Maturase K from Sullivantia sullivantii (Sullivant's coolwort).